The following is a 107-amino-acid chain: ATP-dependent Clp protease adapter protein ClpS (107 aa).

The span at 1-12 (MSGDKDFDKDSD) shows a compositional bias: basic and acidic residues. A disordered region spans residues 1–21 (MSGDKDFDKDSDVTVITRTTP).

Belongs to the ClpS family. Binds to the N-terminal domain of the chaperone ClpA.

Functionally, involved in the modulation of the specificity of the ClpAP-mediated ATP-dependent protein degradation. The sequence is that of ATP-dependent Clp protease adapter protein ClpS from Zymomonas mobilis subsp. mobilis (strain ATCC 31821 / ZM4 / CP4).